The primary structure comprises 1714 residues: Latrophilin Cirl (1714 aa).

Residues 1–765 (MSSIDISGRY…LFTMFDGNMR (765 aa)) lie on the Extracellular side of the membrane. The SUEL-type lectin domain occupies 26–115 (ACEGKKLTIE…KYLEAHYQCI (90 aa)). The N-linked (GlcNAc...) asparagine glycan is linked to asparagine 143. Positions 183–302 (PPHTVTHSTP…GSPASGNNSV (120 aa)) are disordered. Residues 186–198 (TVTHSTPSSSTVP) are compositionally biased toward low complexity. Polar residues predominate over residues 244 to 262 (PSSKLPSAGNATAPSNTRI). Residue asparagine 253 is glycosylated (N-linked (GlcNAc...) asparagine). Low complexity-rich tracts occupy residues 272-282 (DDGTLLTTKSS) and 290-301 (ASNGSPASGNNS). N-linked (GlcNAc...) asparagine glycosylation is found at asparagine 299, asparagine 338, asparagine 395, asparagine 652, asparagine 701, and asparagine 728. Residues 373-397 (YDEYDDDPSSTTPAPSGGDCLHNSS) form a disordered region. The 195-residue stretch at 558–752 (RSVVQKVKNI…AILMDVVDEH (195 aa)) folds into the GAIN-B domain. Disulfide bonds link cysteine 707/cysteine 734 and cysteine 722/cysteine 736. The segment at 707-752 (CVFWNYIDHAWSANGCSLESTNRTHSVCSCNHLTNFAILMDVVDEH) is GPS. Residues 766-786 (VFIYISIAICVVFIVIALLTL) form a helical membrane-spanning segment. Over 787 to 799 (KLFNGVFVKSART) the chain is Cytoplasmic. A helical membrane pass occupies residues 800–820 (TIYTSIYVCLLAIELLFLLGI). The Extracellular segment spans residues 821–826 (EQTETS). Residues 827–847 (IFCGFITVFLHCAILSGAAWF) traverse the membrane as a helical segment. The Cytoplasmic segment spans residues 848-873 (CYEAFHSYYTLTSDELLVEVDQTPKV). Residues 874–894 (NWYYLLSYGLSVSVVAISVAI) traverse the membrane as a helical segment. Over 895-911 (NPSTYTQNDYCVLMEAN) the chain is Extracellular. Residues 912-932 (ILFYATFVAPVLIFFVAAIGY) form a helical membrane-spanning segment. The Cytoplasmic portion of the chain corresponds to 933-966 (TFLSWIIMCRKSCTGLKTKEHTRLASVRFDIRCS). The helical transmembrane segment at 967-987 (FVFLLLLSAVWCSAYFYLRGA) threads the bilayer. The Extracellular portion of the chain corresponds to 988–994 (KTDEDTT). Residues 995-1015 (TIYGYCFICFNTLLGLYIFVF) form a helical membrane-spanning segment. The Cytoplasmic segment spans residues 1016–1714 (HCIQNEKIRR…VRCYLEPLAK (699 aa)). A phosphoserine mark is found at serine 1155, serine 1245, and serine 1252. Disordered regions lie at residues 1229–1253 (PNSQ…LHSR), 1268–1287 (KTKQ…LDPP), 1293–1354 (AFYQ…PPPH), 1447–1536 (GGGS…DERM), and 1551–1694 (FQRQ…QQRH). Over residues 1296–1315 (QQQQQMRRQQQQQQQQQQQQ) the composition is skewed to low complexity. Phosphoserine occurs at positions 1317 and 1318. 2 stretches are compositionally biased toward low complexity: residues 1330 to 1348 (LHLQ…QQQL) and 1453 to 1478 (GGSV…QQQR). Composition is skewed to acidic residues over residues 1486-1500 (DDDD…DEAT) and 1510-1523 (CDDD…DLDD). A compositionally biased stretch (basic and acidic residues) spans 1524-1536 (DAHKLPPQSDERM). The span at 1565–1580 (GALPPGVAPGAGSAGP) shows a compositional bias: low complexity. Residues 1644-1659 (QTPAQKRQQLQKLSPQ) show a composition bias toward polar residues. Over residues 1660–1675 (STTSSSSHTSHSNLQP) the composition is skewed to low complexity. Residues 1679–1693 (PLTHQHPHPPQHQQR) are compositionally biased toward basic residues.

It belongs to the G-protein coupled receptor 2 family. LN-TM7 subfamily. As to quaternary structure, forms a heterodimer, consisting of a large extracellular region non-covalently linked to a seven-transmembrane moiety. In terms of processing, proteolytically cleaved into 2 subunits, an extracellular subunit and a seven-transmembrane subunit.

It localises to the cell membrane. The sequence is that of Latrophilin Cirl from Drosophila ananassae (Fruit fly).